The chain runs to 197 residues: Ribonuclease HII (197 aa).

The RNase H type-2 domain occupies K9 to F197. The a divalent metal cation site is built by D15, E16, and D107.

The protein belongs to the RNase HII family. It depends on Mn(2+) as a cofactor. Mg(2+) serves as cofactor.

The protein resides in the cytoplasm. It carries out the reaction Endonucleolytic cleavage to 5'-phosphomonoester.. Its function is as follows. Endonuclease that specifically degrades the RNA of RNA-DNA hybrids. This Haemophilus influenzae (strain ATCC 51907 / DSM 11121 / KW20 / Rd) protein is Ribonuclease HII (rnhB).